Here is a 648-residue protein sequence, read N- to C-terminus: Biosynthetic arginine decarboxylase (648 aa).

The residue at position 109 (K109) is an N6-(pyridoxal phosphate)lysine. 291–301 provides a ligand contact to substrate; the sequence is IDVGGGLGIDF.

It belongs to the Orn/Lys/Arg decarboxylase class-II family. SpeA subfamily. Mg(2+) is required as a cofactor. Requires pyridoxal 5'-phosphate as cofactor.

The enzyme catalyses L-arginine + H(+) = agmatine + CO2. Catalyzes the biosynthesis of agmatine from arginine. The chain is Biosynthetic arginine decarboxylase from Prochlorococcus marinus subsp. pastoris (strain CCMP1986 / NIES-2087 / MED4).